The primary structure comprises 402 residues: CMP-sialic acid transporter 3 (402 aa).

Residues Met-1–Asn-42 lie on the Cytoplasmic side of the membrane. A helical transmembrane segment spans residues Val-43–Cys-63. Over Lys-64–Pro-73 the chain is Lumenal. Residues Val-74–Ile-94 traverse the membrane as a helical segment. The Cytoplasmic portion of the chain corresponds to Gln-95–Asn-118. A helical membrane pass occupies residues Asn-119–Met-139. Residues Gln-140–Ala-146 are Lumenal-facing. A helical membrane pass occupies residues Thr-147–Met-167. At Arg-168 to Arg-170 the chain is on the cytoplasmic side. A helical transmembrane segment spans residues Phe-171–Leu-191. The Lumenal segment spans residues Lys-192 to Gly-202. Residues Leu-203 to Ala-223 traverse the membrane as a helical segment. Residues Ser-224–Asn-243 lie on the Cytoplasmic side of the membrane. The helical transmembrane segment at Leu-244–Ile-264 threads the bilayer. Residues Gln-265 to Thr-280 lie on the Lumenal side of the membrane. The chain crosses the membrane as a helical span at residues Met-281 to Ala-301. Topologically, residues Asp-302 to Ser-321 are cytoplasmic. Residues Ala-322–Ile-342 traverse the membrane as a helical segment. Residues Ser-343–Val-402 lie on the Lumenal side of the membrane.

The protein belongs to the nucleotide-sugar transporter family. CMP-Sialate:CMP antiporter (TC 2.A.7.12) subfamily.

Its subcellular location is the golgi apparatus membrane. In terms of biological role, sugar transporter involved in the transport of CMP-sialic acid from the cytoplasm into the Golgi. May transport important nucleotide sugars such as CMP-Kdo (2-keto-3-deoxy-D-manno-octulosonic acid) in physiological conditions. This Oryza sativa subsp. indica (Rice) protein is CMP-sialic acid transporter 3.